We begin with the raw amino-acid sequence, 160 residues long: MTRKQRRLFMIFGALGTLGVAVGLILFALSDNIVFFYGPTELAEKAPHPGARLRIGGLVKPGSLEREAGQTVHFIVTDNKHDVAVTYTGLLPDLFREGQGVVTEGTLTGKETLRADSVLAKHDERYMPREVADALKKQGVWQEDGQAKPATQGAAAPLIR.

Over 1–7 (MTRKQRR) the chain is Cytoplasmic. Residues 8-28 (LFMIFGALGTLGVAVGLILFA) form a helical; Signal-anchor for type II membrane protein membrane-spanning segment. Residues 29-160 (LSDNIVFFYG…TQGAAAPLIR (132 aa)) lie on the Periplasmic side of the membrane. His-122 and Tyr-126 together coordinate heme. Residues 140 to 160 (VWQEDGQAKPATQGAAAPLIR) are disordered.

This sequence belongs to the CcmE/CycJ family.

It localises to the cell inner membrane. In terms of biological role, heme chaperone required for the biogenesis of c-type cytochromes. Transiently binds heme delivered by CcmC and transfers the heme to apo-cytochromes in a process facilitated by CcmF and CcmH. This chain is Cytochrome c-type biogenesis protein CcmE, found in Beijerinckia indica subsp. indica (strain ATCC 9039 / DSM 1715 / NCIMB 8712).